Reading from the N-terminus, the 542-residue chain is Chaperonin GroEL (542 aa).

ATP-binding positions include 29-32, 86-90, glycine 413, 476-478, and aspartate 492; these read TLGP, DGTTT, and NAA. Positions 521–542 are disordered; sequence QPDENGPAAGPDMGMGGMGGMM. Residues 533-542 show a composition bias toward gly residues; sequence MGMGGMGGMM.

It belongs to the chaperonin (HSP60) family. As to quaternary structure, forms a cylinder of 14 subunits composed of two heptameric rings stacked back-to-back. Interacts with the co-chaperonin GroES.

Its subcellular location is the cytoplasm. It carries out the reaction ATP + H2O + a folded polypeptide = ADP + phosphate + an unfolded polypeptide.. Together with its co-chaperonin GroES, plays an essential role in assisting protein folding. The GroEL-GroES system forms a nano-cage that allows encapsulation of the non-native substrate proteins and provides a physical environment optimized to promote and accelerate protein folding. The protein is Chaperonin GroEL of Listeria innocua serovar 6a (strain ATCC BAA-680 / CLIP 11262).